Consider the following 407-residue polypeptide: Carbamoyl phosphate synthase small chain (407 aa).

The tract at residues 1–205 is CPSase; it reads MTETTPKTAP…LQDGYGEQDA (205 aa). L-glutamine is bound by residues Ser-60, Gly-257, and Gly-259. The Glutamine amidotransferase type-1 domain maps to 209-397; that stretch reads HVVALDFGVK…INLIRERKGQ (189 aa). Residue Cys-286 is the Nucleophile of the active site. L-glutamine is bound by residues Leu-287, Gln-290, Asn-328, Gly-330, and Phe-331. Catalysis depends on residues His-370 and Glu-372.

This sequence belongs to the CarA family. Composed of two chains; the small (or glutamine) chain promotes the hydrolysis of glutamine to ammonia, which is used by the large (or ammonia) chain to synthesize carbamoyl phosphate. Tetramer of heterodimers (alpha,beta)4.

It carries out the reaction hydrogencarbonate + L-glutamine + 2 ATP + H2O = carbamoyl phosphate + L-glutamate + 2 ADP + phosphate + 2 H(+). The enzyme catalyses L-glutamine + H2O = L-glutamate + NH4(+). Its pathway is amino-acid biosynthesis; L-arginine biosynthesis; carbamoyl phosphate from bicarbonate: step 1/1. It functions in the pathway pyrimidine metabolism; UMP biosynthesis via de novo pathway; (S)-dihydroorotate from bicarbonate: step 1/3. Small subunit of the glutamine-dependent carbamoyl phosphate synthetase (CPSase). CPSase catalyzes the formation of carbamoyl phosphate from the ammonia moiety of glutamine, carbonate, and phosphate donated by ATP, constituting the first step of 2 biosynthetic pathways, one leading to arginine and/or urea and the other to pyrimidine nucleotides. The small subunit (glutamine amidotransferase) binds and cleaves glutamine to supply the large subunit with the substrate ammonia. The polypeptide is Carbamoyl phosphate synthase small chain (Brucella suis (strain ATCC 23445 / NCTC 10510)).